Reading from the N-terminus, the 549-residue chain is Dicarboxylate transporter 2.2, chloroplastic (549 aa).

A chloroplast-targeting transit peptide spans 1–54 (MESLALRSISLSASYLSLHRSSSKSFALLPPSISVHTSPTLRSLSISSPRFTLR). The segment at 57–79 (ASSLPEEQNKPQPPPPSPPQPQG) is disordered. Residues 67-77 (PQPPPPSPPQP) show a composition bias toward pro residues. 12 helical membrane passes run 79–99 (GAKL…RFLI), 115–135 (IFLF…AWAF), 151–171 (TAFA…FFFA), 220–240 (AGGV…SYPG), 247–267 (LGSF…AILL), 294–314 (WFKV…LIIY), 344–364 (NEWI…FGEA), 365–385 (IGIA…LLGV), 403–423 (WFAV…VAWM), 436–456 (LTWP…HYLF), 470–490 (FLAM…CLAF), and 523–543 (VGFV…SFWW).

It belongs to the SLC13A/DASS transporter (TC 2.A.47) family. DIT1 subfamily. As to expression, expressed in roots, rosette and cauline leaves, stems, flowers and siliques.

The protein resides in the plastid. It localises to the chloroplast inner membrane. May be involved in the transport of dicarboxylate compounds. The polypeptide is Dicarboxylate transporter 2.2, chloroplastic (DIT2-2) (Arabidopsis thaliana (Mouse-ear cress)).